A 330-amino-acid chain; its full sequence is Carbonic anhydrase (330 aa).

A chloroplast transit peptide-like region spans residues 1–109 (MSAASAFAMN…AATRIDQITA (109 aa)).

Belongs to the beta-class carbonic anhydrase family.

Its subcellular location is the cytoplasm. The enzyme catalyses hydrogencarbonate + H(+) = CO2 + H2O. Functionally, reversible hydration of carbon dioxide. This is Carbonic anhydrase from Flaveria bidentis (Coastal plain yellowtops).